A 207-amino-acid polypeptide reads, in one-letter code: ATP-dependent Clp protease proteolytic subunit (207 aa).

Serine 111 functions as the Nucleophile in the catalytic mechanism. Histidine 136 is an active-site residue.

Belongs to the peptidase S14 family. Fourteen ClpP subunits assemble into 2 heptameric rings which stack back to back to give a disk-like structure with a central cavity, resembling the structure of eukaryotic proteasomes.

It is found in the cytoplasm. The catalysed reaction is Hydrolysis of proteins to small peptides in the presence of ATP and magnesium. alpha-casein is the usual test substrate. In the absence of ATP, only oligopeptides shorter than five residues are hydrolyzed (such as succinyl-Leu-Tyr-|-NHMec, and Leu-Tyr-Leu-|-Tyr-Trp, in which cleavage of the -Tyr-|-Leu- and -Tyr-|-Trp bonds also occurs).. In terms of biological role, cleaves peptides in various proteins in a process that requires ATP hydrolysis. Has a chymotrypsin-like activity. Plays a major role in the degradation of misfolded proteins. In Psychromonas ingrahamii (strain DSM 17664 / CCUG 51855 / 37), this protein is ATP-dependent Clp protease proteolytic subunit.